Reading from the N-terminus, the 78-residue chain is Defensin beta 136 (78 aa).

The first 21 residues, 1-21 (MNLCLSALLFFLVILLPSGKG), serve as a signal peptide directing secretion. 3 disulfide bridges follow: C33/C60, C40/C54, and C44/C61.

This sequence belongs to the beta-defensin family.

Its subcellular location is the secreted. Host defense peptide that exhibits antibacterial and antifungal activity. Exhibits antimicrobial activity against E.coli, S.aureus and C.albicans (in vitro). Has high lipopolysaccharide (LPS)-binding affinity, and may thereby be involved in immunoregulation through LPS neutralization. In Homo sapiens (Human), this protein is Defensin beta 136 (DEFB136).